The sequence spans 506 residues: Arylsulfatase A (506 aa).

A signal peptide spans 1–17 (MALGTLFLALAAGLSTA). Ca(2+) contacts are provided by aspartate 28, aspartate 29, and cysteine 68. Cysteine 68 functions as the Nucleophile in the catalytic mechanism. Cysteine 68 is modified (3-oxoalanine (Cys)). Lysine 122 contacts substrate. Residue histidine 124 is part of the active site. Serine 149 is a substrate binding site. Disulfide bonds link cysteine 155-cysteine 171 and cysteine 160-cysteine 167. An N-linked (GlcNAc...) asparagine glycan is attached at asparagine 157. Asparagine 183 is a glycosylation site (N-linked (GlcNAc...) asparagine). Histidine 228 serves as a coordination point for substrate. 2 residues coordinate Ca(2+): aspartate 280 and asparagine 281. 4 cysteine pairs are disulfide-bonded: cysteine 299/cysteine 413, cysteine 487/cysteine 499, cysteine 488/cysteine 501, and cysteine 492/cysteine 498. Lysine 301 provides a ligand contact to substrate. N-linked (GlcNAc...) asparagine glycosylation is present at asparagine 349.

This sequence belongs to the sulfatase family. In terms of assembly, homodimer at neutral pH and homooctamer at acidic pH. Exists both as a single chain of 58 kDa (component A) or as a chain of 50 kDa (component B) linked by disulfide bond(s) to a 7 kDa chain (component C). Interacts with SUMF1. Ca(2+) is required as a cofactor. Post-translationally, the conversion to 3-oxoalanine (also known as C-formylglycine, FGly), of a serine or cysteine residue in prokaryotes and of a cysteine residue in eukaryotes, is critical for catalytic activity. This post-translational modification is severely defective in multiple sulfatase deficiency (MSD).

The protein resides in the endoplasmic reticulum. Its subcellular location is the lysosome. The catalysed reaction is an N-acyl-1-beta-D-(3-O-sulfo)-galactosyl-sphing-4-enine + H2O = a beta-D-galactosyl-(1&lt;-&gt;1')-N-acylsphing-4-enine + sulfate + H(+). Its function is as follows. Hydrolyzes cerebroside sulfate. In Mus musculus (Mouse), this protein is Arylsulfatase A (Arsa).